A 657-amino-acid chain; its full sequence is Hemocyanin (657 aa).

The N-linked (GlcNAc...) asparagine glycan is linked to N167. The Cu cation site is built by H194, H198, H224, H344, H348, and H384. Disulfide bonds link C483–C502 and C562–C609.

Belongs to the tyrosinase family. Hemocyanin subfamily. It consists of at least four very similar subunits. In terms of tissue distribution, hemolymph.

Its subcellular location is the secreted. It localises to the extracellular space. Hemocyanins are copper-containing oxygen carriers occurring freely dissolved in the hemolymph of many mollusks and arthropods. This Palinurus vulgaris (European spiny lobster) protein is Hemocyanin.